A 1192-amino-acid polypeptide reads, in one-letter code: ATP-dependent helicase/deoxyribonuclease subunit B (1192 aa).

Belongs to the helicase family. AddB/RexB type 2 subfamily. As to quaternary structure, heterodimer of AddA and RexB. Mg(2+) serves as cofactor.

The heterodimer acts as both an ATP-dependent DNA helicase and an ATP-dependent, dual-direction single-stranded exonuclease. Recognizes the chi site generating a DNA molecule suitable for the initiation of homologous recombination. This subunit has 5' -&gt; 3' nuclease activity but not helicase activity. The protein is ATP-dependent helicase/deoxyribonuclease subunit B of Pediococcus pentosaceus (strain ATCC 25745 / CCUG 21536 / LMG 10740 / 183-1w).